Here is a 785-residue protein sequence, read N- to C-terminus: MKLGKVELCHFLQLIALFLCFSGMSQAELPRSRSKPYFQSGRSRTKRSWVWNQFFVLEEYMGSDPLYVGKLHSDVDKGDGSIKYILSGEGASSIFIIDENTGDIHATKRLDREEQAYYTLRAQALDRLTNKPVEPESEFVIKIQDINDNEPKFLDGPYTAGVPEMSPVGTSVVQVTATDADDPTYGNSARVVYSILQGQPYFSVEPKTGVIKTALPNMDREAKDQYLLVIQAKDMVGQNGGLSGTTSVTVTLTDVNDNPPRFPRRSYQYNVPESLPVASVVARIKAADADIGVNAEMEYKIVDGDGLGIFKISADKDTQEGIITIQKELDFEAKTSYTLRIEAANRDADPRFLSLGPFSDTTTVKIIVEDVDEPPVFSSPLYPMEVSEATQVGHIIGTVAAHDPDSSNSPVRYSIDRNTDLERYFNIDANSGVITTAKSLDRETNAVHNITVLAMESQNPSQVGRGYVAITILDINDNAPEFAMDYETTVCENAQPGQVIQKISAVDKDEPSNGHQFYFSLTTDMTNNHNFSLKDNKDNTASILTRRNGFRRQEQSVYYLPIFIVDSGSPSLSSTNTLTIRVCDCDADGIAQTCNAEAYVLPAGLSTGALIAILACVLTLLVLILLIVTMRRRKKEPLIFDEERDIRENIVRYDDEGGGEEDTEAFDMAALRNLNAIRDSKTRRDVTPEIQFLSRPTFKNIPDNVIFREFIWERLKEADVDPGAPPYDSLQTYAFEGNGSVAESLSSLDSISSNSDQNYDYLSDWGPRFKRLAEMYGNGQESLYS.

Residues 1–27 (MKLGKVELCHFLQLIALFLCFSGMSQA) form the signal peptide. The propeptide occupies 28–47 (ELPRSRSKPYFQSGRSRTKR). At 28-607 (ELPRSRSKPY…AYVLPAGLST (580 aa)) the chain is on the extracellular side. Cadherin domains are found at residues 49-153 (WVWN…EPKF), 154-262 (LDGP…PPRF), 263-377 (PRRS…PPVF), 378-482 (SSPL…APEF), and 482-599 (FAMD…AEAY). 2 N-linked (GlcNAc...) asparagine glycosylation sites follow: Asn449 and Asn530. A helical transmembrane segment spans residues 608 to 628 (GALIAILACVLTLLVLILLIV). Residues 629-785 (TMRRRKKEPL…YGNGQESLYS (157 aa)) are Cytoplasmic-facing.

It localises to the cell membrane. In terms of biological role, cadherins are calcium-dependent cell adhesion proteins. They preferentially interact with themselves in a homophilic manner in connecting cells; cadherins may thus contribute to the sorting of heterogeneous cell types. This Mus musculus (Mouse) protein is Cadherin-7 (Cdh7).